The primary structure comprises 139 residues: Large-conductance mechanosensitive channel 1 (139 aa).

The next 3 helical transmembrane spans lie at 8–28, 30–50, and 81–101; these read FISKGNVMDLAVGVIIGAAFG, IVDSLVNDIIMPIIGAIFGGL, and GSFITVALNFVILAFIIFLMV.

The protein belongs to the MscL family. As to quaternary structure, homopentamer.

It localises to the cell inner membrane. In terms of biological role, channel that opens in response to stretch forces in the membrane lipid bilayer. May participate in the regulation of osmotic pressure changes within the cell. In Mesorhizobium japonicum (strain LMG 29417 / CECT 9101 / MAFF 303099) (Mesorhizobium loti (strain MAFF 303099)), this protein is Large-conductance mechanosensitive channel 1.